The sequence spans 1214 residues: MKAIYRDMCPNCRGAITDERLAAKNPCDACLDEPISMDDYFQLVTAIRKALKLKGVLKEWEEIYALNKEVKEIEELFKKATGFTFWSAQRSWVKRIIKGKSFSIIAPTGMGKSTFGAFMSIYFALKGKKSYIVVPTTPLVVQTVKKIKAMMEKAEVKVNLVYYHGNLKKKEKDEALEKIKSGNFDILVTSSQFLATRFDELLKDKRIDFMFVDDVDAFLKASKNIDRSLMMLGFNEEIIKKAWEIIKLKKQLAKLLQNESGNEEVEKLNREIERLEREIERYKKENKIGILIVASATGSARGDRIKLYRELLGFEVGSGRSVLRNIVDTYIIPEKSMEEHVEELLKTLGRGGLIFVPIDKGIEYAEQLTNYLKSKGFKVELVSARDKKGLELFEKEEVDYLVGVATYYGTIVRGLDLPHLVRFAIFTGVPKFRFSLDLEQPTIYRVLGLMSEILEFLPEEKRTEGEKLYARLRRLIRNIPQYELMKIEEALAEGLELEGFYNHVLEVFKQAVEFLREALKDEEVLKKIAENPFLSLKQIEGKWYIEIPDVRTYIQASGRTSRLFAGGITKGLSVILVDDQKVFNGLIRQMRWRFVEFEIKPLGEINIEEVLKEIDRDREKVRLVLEGKISEQVKDLVKSALMIVESPNKARTIANFFGQPSKRRIGDLVAYEVSIGDKMLTILASGGHMFDLVTTEGYHGVLLLEKGGKRYFVPVYDTIKRCRDCGHQFVDWEEKGVCPRCGSRNVYDALENVKAMRDLAQEVDEILIGTDPDTEGEKIAWDIRNVLSPYAPVIKRIEFHEVTRPAILRAINEARDINEDRVNAQLVRRIEDRWIGFELSQKLWEVFENYNLSAGRVQTPVLGWIVQRYKEFTESETDFLGLTLENDITIILEGVSGDVQEVYVKEVTIEEREINPLPPYTTDAMLQDASRFLGFSATHTMQLAQDLFELGLTTYHRTDSIHVSNTGIEIAKEYITQEIGEEYFAPRKWGEEGAHEAIRPTRPIDTGRLIQLIRDGIITLPRNLTKDHFKLYDLIFRRFMASQMKPAKVLYERAVIGTPYGEVEIEGYIDVIYDGWSRIKPLPLKKLPRLEKDQILKVTEIRKWRAPKVSLYTQGDVIALMKERGIGRPSTYAKIVQTLLQRGYVIETKSKKKLVPTEKGIKVYHYLVSKYKDLVSEERTRQLEKLMDMVEEAKANYQEVLNELYEEILRYVKS.

The segment at 1–37 (MKAIYRDMCPNCRGAITDERLAAKNPCDACLDEPISM) adopts an RG N-terminal-type zinc-finger fold. Zn(2+)-binding residues include cysteine 9, cysteine 12, cysteine 27, and cysteine 30. ATP is bound by residues glutamine 89 and 106 to 113 (APTGMGKS). Residues 93–252 (VKRIIKGKSF…WEIIKLKKQL (160 aa)) enclose the Helicase ATP-binding domain. The DEAD box signature appears at 213–216 (DDVD). A topoisomerase I region spans residues 635–1214 (DLVKSALMIV…YEEILRYVKS (580 aa)). Positions 639 to 802 (SALMIVESPN…VIKRIEFHEV (164 aa)) constitute a Toprim domain. Glutamate 645 contributes to the Mg(2+) binding site. The segment at 719–748 (IKRCRDCGHQFVDWEEKGVCPRCGSRNVYD) adopts an RG C-terminal-type zinc-finger fold. Zn(2+) contacts are provided by cysteine 722, cysteine 725, cysteine 738, and cysteine 741. Aspartate 771 is a binding site for Mg(2+). The Topo IA-type catalytic domain maps to 818-1212 (NEDRVNAQLV…ELYEEILRYV (395 aa)). The active-site O-(5'-phospho-DNA)-tyrosine intermediate is tyrosine 955.

In the N-terminal section; belongs to the DEAD box helicase family. DDVD subfamily. This sequence in the C-terminal section; belongs to the type IA topoisomerase family. Monomer. Requires Zn(2+) as cofactor. It depends on Mg(2+) as a cofactor.

The protein resides in the cytoplasm. It catalyses the reaction ATP + H2O = ADP + phosphate + H(+). Functionally, modifies the topological state of DNA by introducing positive supercoils in an ATP-dependent process. Increases the linking number in steps of +1. Binds to single-stranded DNA, transiently cleaves and then rejoins the ends, introducing a positive supercoil in the process. The scissile phosphodiester is attacked by the catalytic tyrosine of the enzyme, resulting in the formation of a DNA-(5'-phosphotyrosyl)-enzyme intermediate. Probably involved in rewinding DNA strands in regions of the chromosome that have opened up to allow replication, transcription, DNA repair and/or for DNA protection. The protein is Reverse gyrase of Pyrococcus furiosus (strain ATCC 43587 / DSM 3638 / JCM 8422 / Vc1).